The primary structure comprises 136 residues: T-cell receptor beta chain V region LB2 (136 aa).

A signal peptide spans 1–21; the sequence is MNKWVFCWVTLCLLTVETTHG. Residues 22–116 are v segment; the sequence is DGGIITQTPK…EMTVFLCASS (95 aa). Cysteines 45 and 113 form a disulfide. The tract at residues 117-120 is d segment; sequence IRLA. The interval 121 to 136 is j segment; it reads SAETLYFGSGTRLTVL.

The polypeptide is T-cell receptor beta chain V region LB2 (Mus musculus (Mouse)).